Here is a 184-residue protein sequence, read N- to C-terminus: Probable RNA 2'-phosphotransferase (184 aa).

The protein belongs to the KptA/TPT1 family.

Its function is as follows. Removes the 2'-phosphate from RNA via an intermediate in which the phosphate is ADP-ribosylated by NAD followed by a presumed transesterification to release the RNA and generate ADP-ribose 1''-2''-cyclic phosphate (APPR&gt;P). May function as an ADP-ribosylase. This chain is Probable RNA 2'-phosphotransferase, found in Rhizobium leguminosarum bv. trifolii (strain WSM2304).